We begin with the raw amino-acid sequence, 97 residues long: Protein SENESCENCE-ASSOCIATED GENE 21, mitochondrial (97 aa).

Residues 1-46 constitute a mitochondrion transit peptide; that stretch reads MARSISNVKIVSAFVSRELSNAIFRRGYAATAAQGSVSSGGRSGAV.

Belongs to the LEA type 3 family. Expressed in roots, stems leaves and flowers, but not in seeds. In short days, observed in cotyledons and roots but absent from rosette leaves.

The protein localises to the mitochondrion. In terms of biological role, mediates tolerance to oxidative stresses (e.g. hydrogen peroxide H(2)O(2), diamide, menadione and tert-butyl hydroperoxide) by minimizing the negative effects of oxidation and monitoring photosynthesis during stress. Promotes root development. Prevents premature aging (e.g. senescence and flowering). Involved in resistance against compatible pathogens such as Botrytis cinerea and Pseudomonas syringae pv. tomato. In Arabidopsis thaliana (Mouse-ear cress), this protein is Protein SENESCENCE-ASSOCIATED GENE 21, mitochondrial.